The chain runs to 179 residues: MVKVANKYAKALFDVSLDTNNLETINEELTVINEAVKDKIEQLRMVDSNPTQTAEQRRELINGVFTDINPYIKNMMYVLADNRHISLIADVFKAFQSLYNGHYNQDFATIESTYELSQEELDKIVKLVTQQTKLSKVIVDTKINPDLIGGFRVKVGTTVLDGSVRNDLVQLQRKFRRVN.

This sequence belongs to the ATPase delta chain family. F-type ATPases have 2 components, F(1) - the catalytic core - and F(0) - the membrane proton channel. F(1) has five subunits: alpha(3), beta(3), gamma(1), delta(1), epsilon(1). F(0) has three main subunits: a(1), b(2) and c(10-14). The alpha and beta chains form an alternating ring which encloses part of the gamma chain. F(1) is attached to F(0) by a central stalk formed by the gamma and epsilon chains, while a peripheral stalk is formed by the delta and b chains.

The protein localises to the cell membrane. Functionally, f(1)F(0) ATP synthase produces ATP from ADP in the presence of a proton or sodium gradient. F-type ATPases consist of two structural domains, F(1) containing the extramembraneous catalytic core and F(0) containing the membrane proton channel, linked together by a central stalk and a peripheral stalk. During catalysis, ATP synthesis in the catalytic domain of F(1) is coupled via a rotary mechanism of the central stalk subunits to proton translocation. In terms of biological role, this protein is part of the stalk that links CF(0) to CF(1). It either transmits conformational changes from CF(0) to CF(1) or is implicated in proton conduction. The chain is ATP synthase subunit delta from Staphylococcus aureus (strain USA300 / TCH1516).